The following is a 300-amino-acid chain: FeMo cofactor biosynthesis protein NifB (300 aa).

A Radical SAM core domain is found at H24–R266. [4Fe-4S] cluster-binding residues include C38, C42, and C45. S-adenosyl-L-methionine contacts are provided by G93, T144, and I196. 2 residues coordinate [4Fe-4S] cluster: C262 and C265.

Belongs to the radical SAM superfamily. NifB family. In terms of assembly, monomer. Requires [4Fe-4S] cluster as cofactor.

Its pathway is cofactor biosynthesis; Fe-Mo cofactor biosynthesis. Involved in the biosynthesis of the iron-molybdenum cofactor (FeMo-co or M-cluster) found in the dinitrogenase enzyme of the nitrogenase complex in nitrogen-fixing microorganisms. NifB catalyzes the crucial step of radical SAM-dependent carbide insertion that occurs concomitant with the insertion of a 9th sulfur and the rearrangement/coupling of two [4Fe-4S] clusters into a [8Fe-9S-C] cluster, the precursor to the M-cluster. The chain is FeMo cofactor biosynthesis protein NifB from Methanocaldococcus jannaschii (strain ATCC 43067 / DSM 2661 / JAL-1 / JCM 10045 / NBRC 100440) (Methanococcus jannaschii).